The sequence spans 141 residues: Hemoglobin subunit alpha-D (141 aa).

Positions 1–141 (MLTAEDKKLI…VSAVLAEKYR (141 aa)) constitute a Globin domain. Positions 58 and 87 each coordinate heme b.

The protein belongs to the globin family. In terms of assembly, heterotetramer of two alpha-D chains and two beta chains. In terms of tissue distribution, red blood cells.

Involved in oxygen transport from the lung to the various peripheral tissues. The polypeptide is Hemoglobin subunit alpha-D (HBAD) (Meleagris gallopavo (Wild turkey)).